Consider the following 690-residue polypeptide: Protein arginine N-methyltransferase 7 (690 aa).

SAM-dependent MTase PRMT-type domains lie at 14-357 and 366-690; these read QNSW…YSLW and TKSV…QKKL.

The protein belongs to the class I-like SAM-binding methyltransferase superfamily. Protein arginine N-methyltransferase family. PRMT7 subfamily. In terms of tissue distribution, expressed at low level in ovary.

Its function is as follows. Essential arginine methyltransferase that can both catalyze the formation of omega-N monomethylarginine (MMA) and symmetrical dimethylarginine (sDMA). Specifically mediates the symmetrical dimethylation of arginine residues in the small nuclear ribonucleoproteins SmD1 and SmD3. In Drosophila melanogaster (Fruit fly), this protein is Protein arginine N-methyltransferase 7 (Art7).